We begin with the raw amino-acid sequence, 398 residues long: LIM domain-binding protein 2 (398 aa).

Disordered regions lie at residues 245–280 (PPAE…TSAY) and 354–398 (DAAN…QASQ). Positions 263–279 (STNNASNSNAGNNATSA) are enriched in low complexity. The LIM interaction domain (LID) domain occupies 323 to 362 (DVMVVGEPTLMGGEFGDEDERLITRLENTQYDAANGMDDE).

This sequence belongs to the LDB family. As to expression, expressed in adult brain, lung, spleen and kidney. Isoform b is generally expressed at a higher level than isoform a.

The protein localises to the nucleus. Its function is as follows. Binds to the LIM domain of a wide variety of LIM domain-containing transcription factors. This chain is LIM domain-binding protein 2, found in Xenopus laevis (African clawed frog).